The chain runs to 582 residues: MHPRYSPAPPPQQQQQMGGPLHQQQGGGGGGGGGIRGPSNAQQLPPQIPRSQNYSNGSSSSAAAAPPTSRSAFPGAPLTASAVALKGALPQRPPAMTSPAAAAAGAALAAGAPYRGAASWTPQGYAPAAAAAAAAVAQQAAYRYTAPLPQPAYAAYTPHTATTPATTTYGQRVPTAASPSNTNSSSSSNTGSQSGTLSTSLSNTTNTNTNMGPNGTVQNQNQQGGEQLSKTNLYIRGLQQGTTDKDLVNMCAQYGTIISTKAILDKTTNKCKGYGFVDFEQPAFAECAVKGLQGKGVQAQMAKQQEQDPTNLYIANLPPHFKETDLEAMLSKYGQVVSTRILRDQQMNSKGVGFARMESREKCEQIIQMFNGNTIPGAKDPLLVKFADGGPKKKNLFKTPDPNARAWRDVSAEGIPVAYDPTMQQNGVSVNVGTPIGVPYSRFSAPQVGGYPVAGSQWIPGYMMTQPITQVDDQTSYSPQYMQMAAAPQLGVTSYKPEAVNQVQPRGISMMVSGDTGVPYGTMMPQLATLQIGNSYISPTYPYYAPPPTIIPTMPMTDSEQASTAASPDEAYTQYPHQAAPK.

Residues 1–12 (MHPRYSPAPPPQ) show a composition bias toward pro residues. A disordered region spans residues 1-73 (MHPRYSPAPP…AAPPTSRSAF (73 aa)). Tyr5 carries the phosphotyrosine modification. Residues 13-24 (QQQQMGGPLHQQ) are compositionally biased toward low complexity. The segment covering 25–36 (QGGGGGGGGGIR) has biased composition (gly residues). Residues 39-57 (SNAQQLPPQIPRSQNYSNG) show a composition bias toward polar residues. Over residues 58 to 72 (SSSSAAAAPPTSRSA) the composition is skewed to low complexity. 2 positions are modified to phosphotyrosine: Tyr125 and Tyr142. Residues 164–225 (PATTTYGQRV…TVQNQNQQGG (62 aa)) are disordered. The span at 178–225 (SPSNTNSSSSSNTGSQSGTLSTSLSNTTNTNTNMGPNGTVQNQNQQGG) shows a compositional bias: low complexity. 2 consecutive RRM domains span residues 231–304 (TNLY…MAKQ) and 310–389 (TNLY…FADG). The tract at residues 555-582 (PMTDSEQASTAASPDEAYTQYPHQAAPK) is disordered.

Functionally, has a role in the perception of gravity. This Drosophila yakuba (Fruit fly) protein is Protein alan shepard.